Consider the following 219-residue polypeptide: Ribonuclease T (219 aa).

An Exonuclease domain is found at 20-194; that stretch reads VVIDIETAGF…YDSLQTANLF (175 aa). 4 residues coordinate Mg(2+): D23, E25, H181, and D186. H181 acts as the Proton donor/acceptor in catalysis.

Belongs to the RNase T family. As to quaternary structure, homodimer. Mg(2+) is required as a cofactor.

Functionally, trims short 3' overhangs of a variety of RNA species, leaving a one or two nucleotide 3' overhang. Responsible for the end-turnover of tRNA: specifically removes the terminal AMP residue from uncharged tRNA (tRNA-C-C-A). Also appears to be involved in tRNA biosynthesis. The polypeptide is Ribonuclease T (Buchnera aphidicola subsp. Schizaphis graminum (strain Sg)).